The chain runs to 178 residues: ATP synthase subunit delta (178 aa).

This sequence belongs to the ATPase delta chain family. As to quaternary structure, F-type ATPases have 2 components, F(1) - the catalytic core - and F(0) - the membrane proton channel. F(1) has five subunits: alpha(3), beta(3), gamma(1), delta(1), epsilon(1). F(0) has three main subunits: a(1), b(2) and c(10-14). The alpha and beta chains form an alternating ring which encloses part of the gamma chain. F(1) is attached to F(0) by a central stalk formed by the gamma and epsilon chains, while a peripheral stalk is formed by the delta and b chains.

It is found in the cell membrane. In terms of biological role, f(1)F(0) ATP synthase produces ATP from ADP in the presence of a proton or sodium gradient. F-type ATPases consist of two structural domains, F(1) containing the extramembraneous catalytic core and F(0) containing the membrane proton channel, linked together by a central stalk and a peripheral stalk. During catalysis, ATP synthesis in the catalytic domain of F(1) is coupled via a rotary mechanism of the central stalk subunits to proton translocation. Its function is as follows. This protein is part of the stalk that links CF(0) to CF(1). It either transmits conformational changes from CF(0) to CF(1) or is implicated in proton conduction. The sequence is that of ATP synthase subunit delta from Streptococcus pyogenes serotype M3 (strain SSI-1).